The chain runs to 149 residues: D-aminoacyl-tRNA deacylase (149 aa).

A Gly-cisPro motif, important for rejection of L-amino acids motif is present at residues 137–138 (GP).

It belongs to the DTD family. As to quaternary structure, homodimer.

The protein localises to the cytoplasm. The enzyme catalyses glycyl-tRNA(Ala) + H2O = tRNA(Ala) + glycine + H(+). The catalysed reaction is a D-aminoacyl-tRNA + H2O = a tRNA + a D-alpha-amino acid + H(+). Functionally, an aminoacyl-tRNA editing enzyme that deacylates mischarged D-aminoacyl-tRNAs. Also deacylates mischarged glycyl-tRNA(Ala), protecting cells against glycine mischarging by AlaRS. Acts via tRNA-based rather than protein-based catalysis; rejects L-amino acids rather than detecting D-amino acids in the active site. By recycling D-aminoacyl-tRNA to D-amino acids and free tRNA molecules, this enzyme counteracts the toxicity associated with the formation of D-aminoacyl-tRNA entities in vivo and helps enforce protein L-homochirality. The polypeptide is D-aminoacyl-tRNA deacylase (Alkaliphilus metalliredigens (strain QYMF)).